A 403-amino-acid chain; its full sequence is Probable N-acetyltransferase HLS1 (403 aa).

The region spanning 2–177 is the N-acetyltransferase domain; sequence TVVREYDPTR…VNPVYAHRVN (176 aa).

It belongs to the acetyltransferase family.

In terms of biological role, ethylene-responsive N-acetyltransferase required for differential cell elongation in the hypocotyl. Regulates apical hook formation of dark-grown seedlings. May control differential cell growth by regulating auxin activity. May be involved in negative feedback regulation of auxin homeostasis through the control of GH3-like genes. Modulates de novo shoot organogenesis. This is Probable N-acetyltransferase HLS1 (HLS1) from Arabidopsis thaliana (Mouse-ear cress).